Reading from the N-terminus, the 305-residue chain is MNQLELYIDTFVEYLQIEKNASPYTVKYYRNDLEIFADFLRSEGLSHIANVTYKDVRIFLTSLYEQELSRRSVSRKISTLRSFYRFLEREGYVEGNPFVQLHLPKTSKPVPGFLYQEELDKLFEVNDITTPLGQRDQALLEMLYGTGIRVSECQNLRLQDIDFAIGTIFVRGKGRKERYVPFGSFAEIALETYLQEGRTKLLEKSNSDTEFIFLNSRGGHLTNRGIRTILNKIVERASLTVHVHPHKLRHTFATHLLNEGADLRSVQELLGHESLSSTQIYTHVTKDHLREAYMKSHPRANGNKS.

Residues 2–88 (NQLELYIDTF…TLRSFYRFLE (87 aa)) enclose the Core-binding (CB) domain. The region spanning 109–294 (PVPGFLYQEE…TKDHLREAYM (186 aa)) is the Tyr recombinase domain. Residues Arg-149, Lys-173, His-246, Arg-249, and His-272 contribute to the active site. Tyr-281 serves as the catalytic O-(3'-phospho-DNA)-tyrosine intermediate.

Belongs to the 'phage' integrase family. XerC subfamily. As to quaternary structure, forms a cyclic heterotetrameric complex composed of two molecules of XerC and two molecules of XerD.

It localises to the cytoplasm. Functionally, site-specific tyrosine recombinase, which acts by catalyzing the cutting and rejoining of the recombining DNA molecules. The XerC-XerD complex is essential to convert dimers of the bacterial chromosome into monomers to permit their segregation at cell division. It also contributes to the segregational stability of plasmids. The polypeptide is Tyrosine recombinase XerC (Oceanobacillus iheyensis (strain DSM 14371 / CIP 107618 / JCM 11309 / KCTC 3954 / HTE831)).